A 156-amino-acid chain; its full sequence is RNA pyrophosphohydrolase (156 aa).

The Nudix hydrolase domain occupies 6–148 (NYRPNVAAIV…KKNIYVKVIK (143 aa)). Positions 43 to 64 (GGIDKGESAKNALFRELKEEIG) match the Nudix box motif.

It belongs to the Nudix hydrolase family. RppH subfamily. The cofactor is a divalent metal cation.

Its function is as follows. Accelerates the degradation of transcripts by removing pyrophosphate from the 5'-end of triphosphorylated RNA, leading to a more labile monophosphorylated state that can stimulate subsequent ribonuclease cleavage. This Campylobacter jejuni subsp. doylei (strain ATCC BAA-1458 / RM4099 / 269.97) protein is RNA pyrophosphohydrolase.